Consider the following 212-residue polypeptide: ATP-dependent Clp protease proteolytic subunit (212 aa).

S113 functions as the Nucleophile in the catalytic mechanism. Residue H138 is part of the active site.

This sequence belongs to the peptidase S14 family. Fourteen ClpP subunits assemble into 2 heptameric rings which stack back to back to give a disk-like structure with a central cavity, resembling the structure of eukaryotic proteasomes.

It localises to the cytoplasm. It carries out the reaction Hydrolysis of proteins to small peptides in the presence of ATP and magnesium. alpha-casein is the usual test substrate. In the absence of ATP, only oligopeptides shorter than five residues are hydrolyzed (such as succinyl-Leu-Tyr-|-NHMec, and Leu-Tyr-Leu-|-Tyr-Trp, in which cleavage of the -Tyr-|-Leu- and -Tyr-|-Trp bonds also occurs).. Functionally, cleaves peptides in various proteins in a process that requires ATP hydrolysis. Has a chymotrypsin-like activity. Plays a major role in the degradation of misfolded proteins. This Saccharophagus degradans (strain 2-40 / ATCC 43961 / DSM 17024) protein is ATP-dependent Clp protease proteolytic subunit.